We begin with the raw amino-acid sequence, 458 residues long: MTSTPTKPTVAFAHLGCEKNRVDTEHMVGLLAEAGYGVSTDESDAAVVVVNTCSFIQDAREESVRTLVELAEQGKELIIAGCLAQHFQEELLESIPEAKAIVGTGDYQHIVDVLQRVEVGERVNRVSAVPTFVGDEHLPRQRTTDQAVAFLKVAEGCDYRCAFCIIPKLRGDQRSRPIESIVAEAHQLAAQGVQELILISQITTNYGLDLYGKPKLAELLRALGDVEIPWIRVHYAYPTGLTPDVLAAYREVPNVVPYLDLPLQHSHPEMLRAMNRPWQADVNDRLLDQIREQLPDAVLRTTLIVGFPGETEEHFQHLMGFLERQRFDHVGVFTFSPEDGTAAADLPDRVDPEVAQARKDALMALQQPISAERNSRWVGRTVDVLIEQHNPQTGEMIGRCARFAPEVDGEVRVQPGAEGQQAAPGSLVPVEITGADIYDLNGQMVGARAMVAAIRADA.

In terms of domain architecture, MTTase N-terminal spans 8-119 (PTVAFAHLGC…IVDVLQRVEV (112 aa)). [4Fe-4S] cluster contacts are provided by cysteine 17, cysteine 53, cysteine 82, cysteine 157, cysteine 161, and cysteine 164. The 230-residue stretch at 143 to 372 (TTDQAVAFLK…MALQQPISAE (230 aa)) folds into the Radical SAM core domain. The region spanning 375–446 (SRWVGRTVDV…IYDLNGQMVG (72 aa)) is the TRAM domain.

The protein belongs to the methylthiotransferase family. RimO subfamily. [4Fe-4S] cluster serves as cofactor.

It localises to the cytoplasm. The catalysed reaction is L-aspartate(89)-[ribosomal protein uS12]-hydrogen + (sulfur carrier)-SH + AH2 + 2 S-adenosyl-L-methionine = 3-methylsulfanyl-L-aspartate(89)-[ribosomal protein uS12]-hydrogen + (sulfur carrier)-H + 5'-deoxyadenosine + L-methionine + A + S-adenosyl-L-homocysteine + 2 H(+). Functionally, catalyzes the methylthiolation of an aspartic acid residue of ribosomal protein uS12. The polypeptide is Ribosomal protein uS12 methylthiotransferase RimO (Synechococcus sp. (strain CC9605)).